We begin with the raw amino-acid sequence, 386 residues long: Succinate--CoA ligase [ADP-forming] subunit beta (386 aa).

One can recognise an ATP-grasp domain in the interval 9 to 244; the sequence is KEILRKYGVP…HDEEDPLETR (236 aa). Residues K46, 53 to 55, E99, C102, and E107 each bind ATP; that span reads GRG. Residues N199 and D213 each contribute to the Mg(2+) site. Substrate contacts are provided by residues N264 and 321–323; that span reads GIM.

This sequence belongs to the succinate/malate CoA ligase beta subunit family. As to quaternary structure, heterotetramer of two alpha and two beta subunits. Mg(2+) is required as a cofactor.

The enzyme catalyses succinate + ATP + CoA = succinyl-CoA + ADP + phosphate. It catalyses the reaction GTP + succinate + CoA = succinyl-CoA + GDP + phosphate. It participates in carbohydrate metabolism; tricarboxylic acid cycle; succinate from succinyl-CoA (ligase route): step 1/1. In terms of biological role, succinyl-CoA synthetase functions in the citric acid cycle (TCA), coupling the hydrolysis of succinyl-CoA to the synthesis of either ATP or GTP and thus represents the only step of substrate-level phosphorylation in the TCA. The beta subunit provides nucleotide specificity of the enzyme and binds the substrate succinate, while the binding sites for coenzyme A and phosphate are found in the alpha subunit. The sequence is that of Succinate--CoA ligase [ADP-forming] subunit beta from Rickettsia peacockii (strain Rustic).